A 130-amino-acid chain; its full sequence is Small ribosomal subunit protein uS8B (130 aa).

It belongs to the universal ribosomal protein uS8 family.

This chain is Small ribosomal subunit protein uS8B (RpS15Ab), found in Drosophila melanogaster (Fruit fly).